We begin with the raw amino-acid sequence, 153 residues long: Endoribonuclease YbeY (153 aa).

Residues His116, His120, and His126 each coordinate Zn(2+).

Belongs to the endoribonuclease YbeY family. Zn(2+) serves as cofactor.

It localises to the cytoplasm. In terms of biological role, single strand-specific metallo-endoribonuclease involved in late-stage 70S ribosome quality control and in maturation of the 3' terminus of the 16S rRNA. The chain is Endoribonuclease YbeY from Paraburkholderia phytofirmans (strain DSM 17436 / LMG 22146 / PsJN) (Burkholderia phytofirmans).